The following is a 203-amino-acid chain: MGFLACALLVVATAHAATAIVNPETCEIGSNFKNYCNNCYCFDGVMDHALCTRESCDRNVWNEDGTRKFPKPGKWISEKENKKNDEPCTPGENFKYYCNDCQCLDGLRAHAMCTRMRCDRNVFNEDGTRKYPEPEKWNSEKERKKSDESCAPGASFKYYCNSCTCGAEGKVAEAQCTSQECDRYKWKKDGSKRPFTLDPVLHD.

The first 19 residues, methionine 1 to alanine 19, serve as a signal peptide directing secretion. Pacifastin domains lie at proline 23–asparagine 59, aspartate 85–asparagine 121, and aspartate 147–tyrosine 184. 6 disulfides stabilise this stretch: cysteine 26-cysteine 41, cysteine 36-cysteine 56, cysteine 39-cysteine 51, cysteine 88-cysteine 103, cysteine 98-cysteine 118, and cysteine 101-cysteine 113. Positions arginine 129–glutamate 148 are enriched in basic and acidic residues. The interval arginine 129–cysteine 150 is disordered. Intrachain disulfides connect cysteine 150-cysteine 165, cysteine 160-cysteine 181, and cysteine 163-cysteine 176.

The protein belongs to the protease inhibitor I19 family. As to expression, expressed by the venom gland.

It is found in the secreted. Its function is as follows. Inhibits trypsin activity and prophenoloxidase (PPO) activation, an enzyme essential for both clotting and insect innate immune responses. It does not inhibit activity of chymotrypsin and protease K, and has no effect on phenoloxidase (PO) activity. The protein is Pacifastin-like protease inhibitor cvp4 of Pimpla hypochondriaca (Parasitoid wasp).